A 162-amino-acid polypeptide reads, in one-letter code: NADPH-dependent 7-cyano-7-deazaguanine reductase (162 aa).

The Thioimide intermediate role is filled by Cys-53. Asp-60 (proton donor) is an active-site residue. Substrate is bound by residues 75–77 (VES) and 94–95 (HE).

It belongs to the GTP cyclohydrolase I family. QueF type 1 subfamily.

The protein localises to the cytoplasm. It catalyses the reaction 7-aminomethyl-7-carbaguanine + 2 NADP(+) = 7-cyano-7-deazaguanine + 2 NADPH + 3 H(+). It participates in tRNA modification; tRNA-queuosine biosynthesis. Catalyzes the NADPH-dependent reduction of 7-cyano-7-deazaguanine (preQ0) to 7-aminomethyl-7-deazaguanine (preQ1). This Exiguobacterium sibiricum (strain DSM 17290 / CCUG 55495 / CIP 109462 / JCM 13490 / 255-15) protein is NADPH-dependent 7-cyano-7-deazaguanine reductase.